A 432-amino-acid polypeptide reads, in one-letter code: Tol-Pal system protein TolB (432 aa).

Residues 1–29 (MMRNVWKSGLRRSAWIGLLMVLCVGVARA) form the signal peptide.

It belongs to the TolB family. As to quaternary structure, the Tol-Pal system is composed of five core proteins: the inner membrane proteins TolA, TolQ and TolR, the periplasmic protein TolB and the outer membrane protein Pal. They form a network linking the inner and outer membranes and the peptidoglycan layer.

Its subcellular location is the periplasm. Its function is as follows. Part of the Tol-Pal system, which plays a role in outer membrane invagination during cell division and is important for maintaining outer membrane integrity. This chain is Tol-Pal system protein TolB, found in Ralstonia nicotianae (strain ATCC BAA-1114 / GMI1000) (Ralstonia solanacearum).